The following is a 367-amino-acid chain: Putative ionic transporter y4hA (367 aa).

11 consecutive transmembrane segments (helical) span residues 12-32 (VPLW…MTLA), 39-59 (SVVL…ASVH), 74-94 (AILL…SLML), 108-128 (VFAA…VLGG), 143-163 (AALA…NFVT), 172-192 (AIQL…FLFV), 221-241 (LAAG…AMLL), 249-269 (VEAL…VVLL), 291-311 (VLGS…AISV), 318-338 (ALGL…VGTI), and 347-367 (VLQG…SAIP).

Belongs to the Ca(2+):cation antiporter (CaCA) (TC 2.A.19) family.

It localises to the cell membrane. Its function is as follows. Possible cation transporter. The sequence is that of Putative ionic transporter y4hA from Sinorhizobium fredii (strain NBRC 101917 / NGR234).